The primary structure comprises 579 residues: Probable receptor-like serine/threonine-protein kinase At5g57670 (579 aa).

A Phosphothreonine modification is found at threonine 256. The Protein kinase domain occupies 267 to 542 (FHQGNIVGIG…LLTNGNEAEI (276 aa)). Residues 273–281 (VGIGGYSEV) and lysine 295 contribute to the ATP site. The active-site Proton acceptor is the aspartate 392. Phosphoserine is present on serine 396. Threonine 432 bears the Phosphothreonine mark.

The protein belongs to the protein kinase superfamily. Ser/Thr protein kinase family.

The enzyme catalyses L-seryl-[protein] + ATP = O-phospho-L-seryl-[protein] + ADP + H(+). It catalyses the reaction L-threonyl-[protein] + ATP = O-phospho-L-threonyl-[protein] + ADP + H(+). This chain is Probable receptor-like serine/threonine-protein kinase At5g57670, found in Arabidopsis thaliana (Mouse-ear cress).